Here is a 529-residue protein sequence, read N- to C-terminus: V-set and immunoglobulin domain-containing protein 10 (529 aa).

A signal peptide spans 1-18 (MMITSAVVLYLLLLSHQT). Ig-like C2-type domains follow at residues 19–110 (VSEE…QTLS) and 129–217 (PATF…QELL). The Extracellular portion of the chain corresponds to 21–411 (EEQVQQFVIG…LNVKTSAGNG (391 aa)). Asparagine 34, asparagine 35, asparagine 46, asparagine 135, asparagine 147, asparagine 159, asparagine 211, asparagine 269, asparagine 280, asparagine 284, asparagine 330, asparagine 357, and asparagine 376 each carry an N-linked (GlcNAc...) asparagine glycan. Cysteines 40 and 96 form a disulfide. Cysteine 150 and cysteine 199 are disulfide-bonded. The 87-residue stretch at 317-403 (PTGQPLATAL…GARELEVYLN (87 aa)) folds into the Ig-like C2-type 3 domain. Cysteines 335 and 387 form a disulfide. Residues 412 to 432 (GAIVGIFVSVLVMMIGIVVGV) traverse the membrane as a helical segment. At 433–529 (TVYTKRDRIC…PQRAELQPAV (97 aa)) the chain is on the cytoplasmic side.

It is found in the membrane. In Danio rerio (Zebrafish), this protein is V-set and immunoglobulin domain-containing protein 10 (vsig10).